The chain runs to 178 residues: Large ribosomal subunit protein uL5 (178 aa).

Belongs to the universal ribosomal protein uL5 family. Part of the 50S ribosomal subunit; part of the 5S rRNA/L5/L18/L25 subcomplex. Contacts the 5S rRNA and the P site tRNA. Forms a bridge to the 30S subunit in the 70S ribosome.

Its function is as follows. This is one of the proteins that bind and probably mediate the attachment of the 5S RNA into the large ribosomal subunit, where it forms part of the central protuberance. In the 70S ribosome it contacts protein S13 of the 30S subunit (bridge B1b), connecting the 2 subunits; this bridge is implicated in subunit movement. Contacts the P site tRNA; the 5S rRNA and some of its associated proteins might help stabilize positioning of ribosome-bound tRNAs. This is Large ribosomal subunit protein uL5 from Psychrobacter arcticus (strain DSM 17307 / VKM B-2377 / 273-4).